The chain runs to 369 residues: C-C chemokine receptor type 9 (369 aa).

Topologically, residues 1–48 (MMPTELTSLIPGMFDDFSYDSTASTDDYMNLNFSSFFCKKNNVRQFAS) are extracellular. The N-linked (GlcNAc...) asparagine glycan is linked to N32. 2 disulfides stabilise this stretch: C38–C289 and C119–C198. The chain crosses the membrane as a helical span at residues 49–74 (HFLPPLYWLVFIVGTLGNSLVILVYW). The Cytoplasmic segment spans residues 75 to 85 (YCTRVKTMTDM). Residues 86-109 (FLLNLAIADLLFLATLPFWAIAAA) form a helical membrane-spanning segment. Residues 110–120 (GQWMFQTFMCK) are Extracellular-facing. A helical transmembrane segment spans residues 121-150 (VVNSMYKMNFYSCVLLIMCISVDRYIAIVQ). Residues 151–159 (AMKAQVWRQ) are Cytoplasmic-facing. A helical membrane pass occupies residues 160-185 (KRLLYSKMVCITIWVMAAVLCTPEIL). Over 186–208 (YSQVSGESGIATCTMVYPKDKNA) the chain is Extracellular. A helical membrane pass occupies residues 209 to 243 (KLKSAVLILKVTLGFFLPFMVMAFCYTIIIHTLVQ). The Cytoplasmic portion of the chain corresponds to 244–248 (AKKSS). Residues 249–283 (KHKALKVTITVLTVFIMSQFPYNSILVVQAVDAYA) traverse the membrane as a helical segment. Topologically, residues 284–290 (MFISNCT) are extracellular. A helical membrane pass occupies residues 291 to 321 (ISTNIDICFQVTQTIAFFHSCLNPVLYVFVG). At 322–369 (ERFRRDLVKTLKNLGCISQAQWVSFTRREGSLKLSSMLLETTSGALSL) the chain is on the cytoplasmic side.

The protein belongs to the G-protein coupled receptor 1 family. As to expression, highly expressed in the thymus and low in lymph nodes and spleen.

Its subcellular location is the cell membrane. Functionally, receptor for chemokine SCYA25/TECK. Subsequently transduces a signal by increasing the intracellular calcium ions level. This is C-C chemokine receptor type 9 (Ccr9) from Mus musculus (Mouse).